The following is a 67-amino-acid chain: Putative ATP synthase subunit epsilon, mitochondrial (67 aa).

It belongs to the eukaryotic ATPase epsilon family. In terms of assembly, F-type ATPases have 2 components, CF(1) - the catalytic core - and CF(0) - the membrane proton channel. CF(1) has five subunits: alpha(3), beta(3), gamma(1), delta(1), epsilon(1). CF(0) seems to have nine subunits: a, b, c, d, e, f, g, F6 and 8 (or A6L).

It localises to the mitochondrion. The protein resides in the mitochondrion inner membrane. Functionally, mitochondrial membrane ATP synthase (F(1)F(0) ATP synthase or Complex V) produces ATP from ADP in the presence of a proton gradient across the membrane which is generated by electron transport complexes of the respiratory chain. F-type ATPases consist of two structural domains, F(1) - containing the extramembraneous catalytic core, and F(0) - containing the membrane proton channel, linked together by a central stalk and a peripheral stalk. During catalysis, ATP synthesis in the catalytic domain of F(1) is coupled via a rotary mechanism of the central stalk subunits to proton translocation. Part of the complex F(1) domain and of the central stalk which is part of the complex rotary element. Rotation of the central stalk against the surrounding alpha(3)beta(3) subunits leads to hydrolysis of ATP in three separate catalytic sites on the beta subunits. This is Putative ATP synthase subunit epsilon, mitochondrial (atp15) from Schizosaccharomyces pombe (strain 972 / ATCC 24843) (Fission yeast).